The following is a 332-amino-acid chain: Tetraacyldisaccharide 4'-kinase (332 aa).

53–60 serves as a coordination point for ATP; the sequence is SVGGNGKT.

This sequence belongs to the LpxK family.

The catalysed reaction is a lipid A disaccharide + ATP = a lipid IVA + ADP + H(+). It functions in the pathway glycolipid biosynthesis; lipid IV(A) biosynthesis; lipid IV(A) from (3R)-3-hydroxytetradecanoyl-[acyl-carrier-protein] and UDP-N-acetyl-alpha-D-glucosamine: step 6/6. Transfers the gamma-phosphate of ATP to the 4'-position of a tetraacyldisaccharide 1-phosphate intermediate (termed DS-1-P) to form tetraacyldisaccharide 1,4'-bis-phosphate (lipid IVA). The chain is Tetraacyldisaccharide 4'-kinase from Haemophilus influenzae (strain 86-028NP).